The chain runs to 230 residues: Type 4 apparatus protein DotY (230 aa).

The interval 202-230 (EPKALETKREEIRQEIESGAEAPTTQSIR) is disordered. The segment covering 204–217 (KALETKREEIRQEI) has biased composition (basic and acidic residues).

The T4BSS is a complex nanomachine composed of several subcomplexes. This subunit is part of the Type IV Coupling Complex (T4CC), a subcomplex composed of the DotLMNYZ core and the IcmSW-LvgA adapter subunits, linked by the C-terminal tail of DotL. Six DotLMNYZ hetero-pentameric units may assemble into a hexameric nanomachine, forming an inner membrane channel for effectors to pass through. Interacts exclusively with DotZ. DotY and DotZ are co-dependent for the assembly into the T4CC.

The protein localises to the cytoplasm. In terms of biological role, component of the Dot/Icm type IVB secretion system (T4BSS), which is used to inject bacterial effector proteins into eukaryotic host cells. Part of a subcomplex which recruits effector proteins and delivers them to the core transmembrane subcomplex. DotY and DotZ play a role in effector translocation, but are not essential and do not influence the stability of the subcomplex main components. The DotY/DotZ main function is to optimize secretion by modulating the delivery trajectory of the IcmSW module and the localization of the machinery to the poles. The polypeptide is Type 4 apparatus protein DotY (Legionella pneumophila subsp. pneumophila (strain Philadelphia 1 / ATCC 33152 / DSM 7513)).